Here is a 183-residue protein sequence, read N- to C-terminus: uncharacterized protein (183 aa).

A helical transmembrane segment spans residues 153–175; sequence LLYVFIRLFAGCLKVFRLCILWL.

Its subcellular location is the membrane. This is an uncharacterized protein from Saccharomyces cerevisiae (strain ATCC 204508 / S288c) (Baker's yeast).